The sequence spans 292 residues: Xyloglucan endotransglucosylase/hydrolase protein 2 (292 aa).

The N-terminal stretch at 1–24 (MNRIRYCFELVSVLFLMFTANARA) is a signal peptide. A GH16 domain is found at 25-219 (RGRGAIDFDV…WAYAPFKAQY (195 aa)). Catalysis depends on Glu-106, which acts as the Nucleophile. Glu-110 functions as the Proton donor in the catalytic mechanism. Xyloglucan-binding positions include Glu-110, 123–125 (QTN), 133–135 (GRE), 198–199 (NW), and Gly-203. Disulfide bonds link Cys-227/Cys-239 and Cys-275/Cys-288. Arg-280 contacts xyloglucan.

This sequence belongs to the glycosyl hydrolase 16 family. XTH group 1 subfamily. In terms of processing, contains at least one intrachain disulfide bond essential for its enzymatic activity.

The protein localises to the secreted. Its subcellular location is the cell wall. It localises to the extracellular space. The protein resides in the apoplast. It carries out the reaction breaks a beta-(1-&gt;4) bond in the backbone of a xyloglucan and transfers the xyloglucanyl segment on to O-4 of the non-reducing terminal glucose residue of an acceptor, which can be a xyloglucan or an oligosaccharide of xyloglucan.. In terms of biological role, may catalyze xyloglucan endohydrolysis (XEH) and/or endotransglycosylation (XET). Cleaves and religates xyloglucan polymers, an essential constituent of the primary cell wall, and thereby participates in cell wall construction of growing tissues. The sequence is that of Xyloglucan endotransglucosylase/hydrolase protein 2 (XTH2) from Arabidopsis thaliana (Mouse-ear cress).